Reading from the N-terminus, the 477-residue chain is Bifunctional protein HldE (477 aa).

The segment at 1-318 is ribokinase; that stretch reads MKVTLPEFER…ENAVRGRAET (318 aa). Lys-179 is modified (N6-acetyllysine). 195–198 serves as a coordination point for ATP; the sequence is NLSE. Asp-264 is a catalytic residue. The interval 344-477 is cytidylyltransferase; it reads MTNGVFDILH…IKKIQQDKKG (134 aa).

The protein in the N-terminal section; belongs to the carbohydrate kinase PfkB family. In the C-terminal section; belongs to the cytidylyltransferase family. Homodimer.

It carries out the reaction D-glycero-beta-D-manno-heptose 7-phosphate + ATP = D-glycero-beta-D-manno-heptose 1,7-bisphosphate + ADP + H(+). It catalyses the reaction D-glycero-beta-D-manno-heptose 1-phosphate + ATP + H(+) = ADP-D-glycero-beta-D-manno-heptose + diphosphate. It functions in the pathway nucleotide-sugar biosynthesis; ADP-L-glycero-beta-D-manno-heptose biosynthesis; ADP-L-glycero-beta-D-manno-heptose from D-glycero-beta-D-manno-heptose 7-phosphate: step 1/4. Its pathway is nucleotide-sugar biosynthesis; ADP-L-glycero-beta-D-manno-heptose biosynthesis; ADP-L-glycero-beta-D-manno-heptose from D-glycero-beta-D-manno-heptose 7-phosphate: step 3/4. Catalyzes the phosphorylation of D-glycero-D-manno-heptose 7-phosphate at the C-1 position to selectively form D-glycero-beta-D-manno-heptose-1,7-bisphosphate. Functionally, catalyzes the ADP transfer from ATP to D-glycero-beta-D-manno-heptose 1-phosphate, yielding ADP-D-glycero-beta-D-manno-heptose. In Shigella dysenteriae serotype 1 (strain Sd197), this protein is Bifunctional protein HldE.